The following is a 713-amino-acid chain: Vacuolar amino acid transporter 4 (713 aa).

The tract at residues 1–33 (MVTNNGDGEHLGIRRNGNLRHPSNNMKIPRRAQ) is disordered. At 1–242 (MVTNNGDGEH…IDKVPFLTRN (242 aa)) the chain is on the vacuolar side. Residues 21–33 (HPSNNMKIPRRAQ) show a composition bias toward polar residues. S88 carries the phosphoserine modification. Residues 99 to 121 (RSSVSHGNEAIPRVNPTKNSSAS) are disordered. 2 positions are modified to phosphoserine: S130 and S165. The tract at residues 200-233 (KRQEHQLNDSASSDFTSHESDSINQSSPSSNQDI) is disordered. Over residues 221–231 (SINQSSPSSNQ) the composition is skewed to low complexity. Residues 243–263 (FLEFLYVFGHFAGESFEDDFI) traverse the membrane as a helical segment. Topologically, residues 264-301 (PDSSNMMIRGEDERSALLSRPDHMKVLPSAKGTTSTKK) are cytoplasmic. Residues 302–322 (VFLILLKSFIGTGVLFLPNAF) form a helical membrane-spanning segment. Topologically, residues 323-326 (HNGG) are vacuolar. A helical membrane pass occupies residues 327 to 347 (LFFSVSMLAFFGIYSYWCYYI). The Cytoplasmic segment spans residues 348 to 373 (LVQAKSSCGVSSFGDIGLKLYGPWMR). The chain crosses the membrane as a helical span at residues 374 to 394 (IIILFSLVITQVGFSGAYMIF). Topologically, residues 395-410 (TAKNLQAFLDNVFHVG) are vacuolar. The helical transmembrane segment at 411-431 (VLPLSYLMVFQTIIFIPLSFI) threads the bilayer. Residues 432–438 (RNISKLS) are Cytoplasmic-facing. A helical transmembrane segment spans residues 439 to 459 (LPSLLANFFIMAGLVIVIIFT). Over 460–483 (AKRLFFDLMGTPAMGVVYGLNADR) the chain is Vacuolar. A helical transmembrane segment spans residues 484 to 504 (WTLFIGTAIFAFEGIGLIIPV). The Cytoplasmic segment spans residues 505-515 (QDSMRNPEKFP). The helical transmembrane segment at 516-536 (LVLALVILTATILFISIATLG) threads the bilayer. At 537-561 (YLAYGSNVQTVILLNLPQSNIFVNL) the chain is on the vacuolar side. A helical transmembrane segment spans residues 562–582 (IQLFYSIAIMLSTPLQLFPAI). The Cytoplasmic segment spans residues 583–621 (KIIENKFFPKFTKIYVKHDDLTTRVELRPNSGKLNWKIK). The chain crosses the membrane as a helical span at residues 622–642 (WLKNFIRSIIVIIVVSIAYFG). At 643–648 (SDNLDK) the chain is on the vacuolar side. The chain crosses the membrane as a helical span at residues 649 to 669 (FVSVIGSLACIPLVYIYPSML). At 670–692 (HLRGNSLPETKGEFWRFKPMLDT) the chain is on the cytoplasmic side. Residues 693–711 (ILIFFGIASMLYTSYQSIF) traverse the membrane as a helical segment. Residues 712–713 (GV) lie on the Vacuolar side of the membrane.

The protein belongs to the amino acid/polyamine transporter 2 family.

The protein localises to the vacuole membrane. In terms of biological role, involved in amino acid efflux from the vacuole to the cytoplasm. Capable of transporting large neutral amino acids including tyrosine, glutamine, asparagine, isoleucine and leucine. The sequence is that of Vacuolar amino acid transporter 4 (AVT4) from Saccharomyces cerevisiae (strain ATCC 204508 / S288c) (Baker's yeast).